The following is a 355-amino-acid chain: Phosphoserine aminotransferase (355 aa).

Arg41 provides a ligand contact to L-glutamate. Pyridoxal 5'-phosphate-binding positions include 75 to 76 (AS), Trp99, Thr147, Asp166, and Gln189. Lys190 carries the post-translational modification N6-(pyridoxal phosphate)lysine. 231–232 (NT) is a binding site for pyridoxal 5'-phosphate.

It belongs to the class-V pyridoxal-phosphate-dependent aminotransferase family. SerC subfamily. As to quaternary structure, homodimer. The cofactor is pyridoxal 5'-phosphate.

The protein localises to the cytoplasm. It catalyses the reaction O-phospho-L-serine + 2-oxoglutarate = 3-phosphooxypyruvate + L-glutamate. The catalysed reaction is 4-(phosphooxy)-L-threonine + 2-oxoglutarate = (R)-3-hydroxy-2-oxo-4-phosphooxybutanoate + L-glutamate. It participates in amino-acid biosynthesis; L-serine biosynthesis; L-serine from 3-phospho-D-glycerate: step 2/3. Its pathway is cofactor biosynthesis; pyridoxine 5'-phosphate biosynthesis; pyridoxine 5'-phosphate from D-erythrose 4-phosphate: step 3/5. Functionally, catalyzes the reversible conversion of 3-phosphohydroxypyruvate to phosphoserine and of 3-hydroxy-2-oxo-4-phosphonooxybutanoate to phosphohydroxythreonine. The chain is Phosphoserine aminotransferase from Parabacteroides distasonis (strain ATCC 8503 / DSM 20701 / CIP 104284 / JCM 5825 / NCTC 11152).